Consider the following 103-residue polypeptide: Large ribosomal subunit protein bL21 (103 aa).

Belongs to the bacterial ribosomal protein bL21 family. In terms of assembly, part of the 50S ribosomal subunit. Contacts protein L20.

Its function is as follows. This protein binds to 23S rRNA in the presence of protein L20. This is Large ribosomal subunit protein bL21 from Desulforudis audaxviator (strain MP104C).